A 63-amino-acid chain; its full sequence is uncharacterized protein (63 aa).

Residues 1-17 are compositionally biased toward basic and acidic residues; it reads MRYTDSRKLTPETDANH. Residues 1 to 32 are disordered; sequence MRYTDSRKLTPETDANHKTASPQPIRRISSQT. Over residues 18 to 32 the composition is skewed to polar residues; that stretch reads KTASPQPIRRISSQT.

This sequence to Y.enterocolitica HemP.

This is an uncharacterized protein from Escherichia coli (strain K12).